The sequence spans 953 residues: Scaffold attachment factor B2 (953 aa).

Residues 1–29 (MAETLPGSGDSGPGTASLGPGVAETGTRR) are disordered. Ala2 is subject to N-acetylalanine. Positions 30–64 (LSELRVIDLRAELKKRNLDTGGNKSVLMERLKKAV) constitute an SAP domain. The residue at position 54 (Ser54) is a Phosphoserine. Lys65 is covalently cross-linked (Glycyl lysine isopeptide (Lys-Gly) (interchain with G-Cter in SUMO1); alternate). Residue Lys65 forms a Glycyl lysine isopeptide (Lys-Gly) (interchain with G-Cter in SUMO2); alternate linkage. Residues 91-114 (KGLKMEEEGTEDNGLEDDSRDGQE) are disordered. Residue Lys94 forms a Glycyl lysine isopeptide (Lys-Gly) (interchain with G-Cter in SUMO2) linkage. A compositionally biased stretch (acidic residues) spans 98 to 114 (EGTEDNGLEDDSRDGQE). Ser109 and Ser158 each carry phosphoserine. Residues Lys188 and Lys199 each participate in a glycyl lysine isopeptide (Lys-Gly) (interchain with G-Cter in SUMO2) cross-link. A Phosphothreonine modification is found at Thr201. A Phosphoserine modification is found at Ser207. The interval 219 to 404 (ILGETCKSEP…KDEKGRVGSG (186 aa)) is disordered. Residues 224 to 233 (CKSEPVKEES) show a composition bias toward basic and acidic residues. Lys230 is covalently cross-linked (Glycyl lysine isopeptide (Lys-Gly) (interchain with G-Cter in SUMO)). Over residues 274–285 (SESTAHAQSSKA) the composition is skewed to polar residues. Over residues 292 to 308 (VKREPAEQPGDGERTDC) the composition is skewed to basic and acidic residues. Lys293 is covalently cross-linked (Glycyl lysine isopeptide (Lys-Gly) (interchain with G-Cter in SUMO)). The span at 318-329 (EQSSAASELAEA) shows a compositional bias: low complexity. Over residues 345 to 358 (EARDSKEDGRKFDF) the composition is skewed to basic and acidic residues. Residues 370-382 (ESSTSEGADQKMS) are compositionally biased toward polar residues. Glycyl lysine isopeptide (Lys-Gly) (interchain with G-Cter in SUMO2) cross-links involve residues Lys380, Lys385, Lys388, Lys391, and Lys395. The span at 383–400 (SFKEEKDIKPIIKDEKGR) shows a compositional bias: basic and acidic residues. The RRM domain maps to 407 to 485 (RNLWVSGLSS…RMISVEKAKN (79 aa)). A phosphoserine mark is found at Ser507 and Ser513. Residues Lys517, Lys524, Lys525, Lys541, Lys542, and Lys551 each participate in a glycyl lysine isopeptide (Lys-Gly) (interchain with G-Cter in SUMO2) cross-link. Basic and acidic residues predominate over residues 525 to 551 (KEEKIEKKEEKKPEDIKKEEKDQDELK). Disordered regions lie at residues 525 to 665 (KEEK…RLQR) and 684 to 953 (RERL…TRRY). Residues 555–564 (TNRSRVTKSG) show a composition bias toward polar residues. A compositionally biased stretch (basic and acidic residues) spans 567-579 (GMERTVVMDKSKG). Residues Lys578, Lys586, and Lys608 each participate in a glycyl lysine isopeptide (Lys-Gly) (interchain with G-Cter in SUMO2) cross-link. Basic and acidic residues-rich tracts occupy residues 590–665 (RSKE…RLQR) and 684–820 (RERL…DSRD). Positions 600–953 (DRKSESKEKR…PPYPHFTRRY (354 aa)) are interaction with SAFB1. Residue Lys616 forms a Glycyl lysine isopeptide (Lys-Gly) (interchain with G-Cter in SUMO2); alternate linkage. Lys616 is modified (N6-acetyllysine; alternate). The Nuclear localization signal signature appears at 713–730 (RRQQEQLRYEQERRPGRR). Phosphoserine is present on residues Ser787 and Ser832. The segment covering 843-859 (GGRDWGEHNQRLEEHQA) has biased composition (basic and acidic residues). The span at 881 to 890 (GERGLSGPSG) shows a compositional bias: gly residues. The residue at position 886 (Ser886) is a Phosphoserine. Arg897 and Arg903 each carry omega-N-methylarginine. The segment covering 899–927 (GVAGRGGFAQGGHSQGHVVPGGGLEGGGV) has biased composition (gly residues).

In terms of assembly, interacts with SAFB/SAFB1 and SCAM1. Interacts with isoform 2 SRPK1 and inhibits its activity. Expressed at high levels in the CNS and at low levels in the liver. Expressed in a wide number of breast cancer cell lines.

Its subcellular location is the cytoplasm. It is found in the nucleus. Binds to scaffold/matrix attachment region (S/MAR) DNA. Can function as an estrogen receptor corepressor and can also inhibit cell proliferation. This chain is Scaffold attachment factor B2 (SAFB2), found in Homo sapiens (Human).